The following is a 139-amino-acid chain: Putative nickel-responsive regulator (139 aa).

Ni(2+) contacts are provided by His79, His90, His92, and Cys98.

Belongs to the transcriptional regulatory CopG/NikR family. Ni(2+) serves as cofactor.

Functionally, transcriptional regulator. The chain is Putative nickel-responsive regulator from Pelobacter propionicus (strain DSM 2379 / NBRC 103807 / OttBd1).